Consider the following 100-residue polypeptide: Large ribosomal subunit protein bL21 (100 aa).

It belongs to the bacterial ribosomal protein bL21 family. Part of the 50S ribosomal subunit. Contacts protein L20.

Functionally, this protein binds to 23S rRNA in the presence of protein L20. The sequence is that of Large ribosomal subunit protein bL21 from Deinococcus deserti (strain DSM 17065 / CIP 109153 / LMG 22923 / VCD115).